Consider the following 143-residue polypeptide: Antiholin-like protein LrgA (143 aa).

4 helical membrane passes run 6 to 26 (VYSF…SNII), 30 to 50 (LPIP…LLCL), 61 to 81 (LGTA…ISVI), and 97 to 117 (VIVV…QFIL).

This sequence belongs to the CidA/LrgA family. LrgA subfamily.

The protein resides in the cell membrane. Its function is as follows. Inhibits the expression or activity of extracellular murein hydrolases by interacting, possibly with LrgB, with the holin-like protein CidA. The LrgAB and CidA proteins may affect the proton motive force of the membrane. May be involved in programmed cell death (PCD), possibly triggering PCD in response to antibiotics and environmental stresses. The polypeptide is Antiholin-like protein LrgA (Bacillus anthracis (strain A0248)).